A 381-amino-acid chain; its full sequence is GDSL esterase/lipase At3g48460 (381 aa).

Positions 1–26 are cleaved as a signal peptide; it reads MSSSISPLLTTAISVAILLFSTISTA. Residue S45 is the Nucleophile of the active site. N-linked (GlcNAc...) asparagine glycans are attached at residues N112, N140, and N258. Active-site residues include D344 and H347.

It belongs to the 'GDSL' lipolytic enzyme family.

It is found in the secreted. The polypeptide is GDSL esterase/lipase At3g48460 (Arabidopsis thaliana (Mouse-ear cress)).